Consider the following 192-residue polypeptide: UPF0301 protein Jann_3896 (192 aa).

It belongs to the UPF0301 (AlgH) family.

This chain is UPF0301 protein Jann_3896, found in Jannaschia sp. (strain CCS1).